Consider the following 371-residue polypeptide: Lipoyl synthase, mitochondrial (371 aa).

Residues 1-24 (MLSRFKCSRLQLQKRAISVTKATT) constitute a mitochondrion transit peptide. Residues 20 to 29 (TKATTTTASQ) are compositionally biased toward polar residues. Residues 20–42 (TKATTTTASQPKRRRTTTFSDAL) are disordered. [4Fe-4S] cluster contacts are provided by C107, C112, C118, C138, C142, C145, and S353. One can recognise a Radical SAM core domain in the interval 121–342 (GGDSSKATAT…RDKALELGFL (222 aa)).

It belongs to the radical SAM superfamily. Lipoyl synthase family. It depends on [4Fe-4S] cluster as a cofactor.

The protein resides in the mitochondrion. It catalyses the reaction [[Fe-S] cluster scaffold protein carrying a second [4Fe-4S](2+) cluster] + N(6)-octanoyl-L-lysyl-[protein] + 2 oxidized [2Fe-2S]-[ferredoxin] + 2 S-adenosyl-L-methionine + 4 H(+) = [[Fe-S] cluster scaffold protein] + N(6)-[(R)-dihydrolipoyl]-L-lysyl-[protein] + 4 Fe(3+) + 2 hydrogen sulfide + 2 5'-deoxyadenosine + 2 L-methionine + 2 reduced [2Fe-2S]-[ferredoxin]. The protein operates within protein modification; protein lipoylation via endogenous pathway; protein N(6)-(lipoyl)lysine from octanoyl-[acyl-carrier-protein]: step 2/2. In terms of biological role, catalyzes the radical-mediated insertion of two sulfur atoms into the C-6 and C-8 positions of the octanoyl moiety bound to the lipoyl domains of lipoate-dependent enzymes, thereby converting the octanoylated domains into lipoylated derivatives. This chain is Lipoyl synthase, mitochondrial, found in Lachancea thermotolerans (strain ATCC 56472 / CBS 6340 / NRRL Y-8284) (Yeast).